Reading from the N-terminus, the 545-residue chain is Propane 2-monooxygenase, hydroxylase component large subunit (545 aa).

Fe cation-binding residues include Glu97, Glu127, His130, Glu192, Glu226, and His229.

Belongs to the TmoA/XamoA family. As to quaternary structure, the propane 2-monooxygenase multicomponent enzyme system is composed of an electron transfer component and a monooxygenase component interacting with the effector protein PrmD. The electron transfer component is composed of a reductase (PrmB), and the monooxygenase component is formed by a large subunit (PrmA) and a small subunit (PrmC). Probably requires the presence of the chaperonin-like protein PrmG to ensure a productive folding, resulting of a soluble PrmA, which leads to the active form of PrmABCD. Fe(2+) is required as a cofactor.

It catalyses the reaction propane + NADH + O2 + H(+) = propan-2-ol + NAD(+) + H2O. It carries out the reaction phenol + NADH + O2 + H(+) = hydroquinone + NAD(+) + H2O. In terms of biological role, component of the propane 2-monooxygenase multicomponent enzyme system which is involved in the degradation of propane via the O2-dependent hydroxylation of propane. Under acetone induction, also able to catalyze the oxidation of phenol to yield hydroquinone. This Gordonia sp. (strain TY-5) protein is Propane 2-monooxygenase, hydroxylase component large subunit.